The sequence spans 83 residues: Toxin TdNa5 (83 aa).

An N-terminal signal peptide occupies residues 1-20 (MKTIIFFIACLMLIDVVVES). In terms of domain architecture, LCN-type CS-alpha/beta spans 21–82 (KDGYIIEHRG…IFDSNNNKCG (62 aa)). 4 cysteine pairs are disulfide-bonded: Cys31/Cys81, Cys35/Cys57, Cys43/Cys62, and Cys47/Cys64. Cys81 bears the Cysteine amide mark.

The protein belongs to the long (4 C-C) scorpion toxin superfamily. Sodium channel inhibitor family. Beta subfamily. Expressed by the venom gland.

Its subcellular location is the secreted. Inhibits the sodium currents (Nav) in an apparent irreversible manner. Produces small depolarization and induces repetitive firing in squid axons. Is specific for arthropods (crickets, triatomides, crabs and squids), but is non-toxic to mice. Shows antibacterial activity against both Gram-positive and Gram-negative bacteria. This Tityus discrepans (Venezuelan scorpion) protein is Toxin TdNa5.